A 148-amino-acid chain; its full sequence is Snaclec alboaggregin-D subunit beta (148 aa).

A signal peptide spans M1–A23. An intrachain disulfide couples C27 to C38. A C-type lectin domain is found at Y34–K145. An N-linked (GlcNAc...) asparagine glycan is attached at N47. Intrachain disulfides connect C55–C144 and C121–C136. N-linked (GlcNAc...) asparagine glycosylation is present at N137.

Tetramer of heterodimers of alpha and beta subunits (alphabeta)(4); disulfide-linked. Expressed by the venom gland.

The protein resides in the secreted. Functionally, snaclec that induces human platelet aggregation in the absence of any cofactor with the EC(50) of 0.25 nM and causes tyrosine phosphorylation in human platelets. Antibodies against either platelet GPIbalpha (GP1BA) or GPVI (GP6) inhibit alboaggregin D-induced platelet aggregation. Only the combination of these two antibodies completely inhibit aggregation, suggesting that it acts through both GPIbalpha (GP1BA) and GPVI (GP6). The polypeptide is Snaclec alboaggregin-D subunit beta (Trimeresurus albolabris (White-lipped pit viper)).